The chain runs to 162 residues: Probable tRNA (guanine(10)-N2)-dimethyltransferase (162 aa).

Belongs to the methyltransferase superfamily. Trm-G10 family. In terms of assembly, monomer.

The protein localises to the cytoplasm. The catalysed reaction is guanosine(10) in tRNA + 2 S-adenosyl-L-methionine = N(2)-dimethylguanosine(10) in tRNA + 2 S-adenosyl-L-homocysteine + 2 H(+). Functionally, catalyzes the adenosylmethionine-dependent methylation of the exocyclic amino group (N(2)) of guanosine at position 10 of various tRNAs. Acts via a two-step process that leads to the formation of either N(2)-monomethyl (m(2)G) or N(2)-dimethylguanosine (m(2)(2)G). The protein is Probable tRNA (guanine(10)-N2)-dimethyltransferase (trmG10) of Methanothermococcus thermolithotrophicus (Methanococcus thermolithotrophicus).